A 324-amino-acid chain; its full sequence is Glyoxylate/hydroxypyruvate reductase B (324 aa).

Catalysis depends on residues R237 and E266. H285 functions as the Proton donor in the catalytic mechanism.

The protein belongs to the D-isomer specific 2-hydroxyacid dehydrogenase family. GhrB subfamily. As to quaternary structure, homodimer.

The protein resides in the cytoplasm. It catalyses the reaction glycolate + NADP(+) = glyoxylate + NADPH + H(+). The enzyme catalyses (R)-glycerate + NAD(+) = 3-hydroxypyruvate + NADH + H(+). It carries out the reaction (R)-glycerate + NADP(+) = 3-hydroxypyruvate + NADPH + H(+). In terms of biological role, catalyzes the NADPH-dependent reduction of glyoxylate and hydroxypyruvate into glycolate and glycerate, respectively. The chain is Glyoxylate/hydroxypyruvate reductase B from Salmonella paratyphi B (strain ATCC BAA-1250 / SPB7).